Consider the following 301-residue polypeptide: MQTFAEISALREQIKTFKREGRRIAFVPTMGNLHEGHLTLVRKAREHADIVVVSIFVNPMQFDRADDLNNYPRTLEDDLSKLNGEAVELVFTPTPEMIYPEGLDKQTLVEVPGLSTMLEGASRPGHFRGVATVVTKLFNIVQPDVACFGEKDFQQLAIIRKMTTDLAMDIEIIGVPTVREMDGLAMSSRNGLLTIDERQRAPVLARTMRWISSAIRGGRDDFASIIEDASDQLRAAGLHPDEIFIRDARTLQVVNAESTQAVILMSAFLGKARLIDNQVVELVKDSKEEVDSAESESENSH.

30–37 (MGNLHEGH) lines the ATP pocket. H37 serves as the catalytic Proton donor. A (R)-pantoate-binding site is contributed by Q61. Q61 is a beta-alanine binding site. 149 to 152 (GEKD) lines the ATP pocket. A (R)-pantoate-binding site is contributed by Q155. Residues V178 and 186–189 (MSSR) contribute to the ATP site.

The protein belongs to the pantothenate synthetase family. As to quaternary structure, homodimer.

The protein localises to the cytoplasm. It catalyses the reaction (R)-pantoate + beta-alanine + ATP = (R)-pantothenate + AMP + diphosphate + H(+). It participates in cofactor biosynthesis; (R)-pantothenate biosynthesis; (R)-pantothenate from (R)-pantoate and beta-alanine: step 1/1. Its function is as follows. Catalyzes the condensation of pantoate with beta-alanine in an ATP-dependent reaction via a pantoyl-adenylate intermediate. This is Pantothenate synthetase from Vibrio vulnificus (strain CMCP6).